The primary structure comprises 357 residues: 4-hydroxy-3-methylbut-2-en-1-yl diphosphate synthase (flavodoxin) (357 aa).

Residues C264, C267, C299, and E306 each contribute to the [4Fe-4S] cluster site.

This sequence belongs to the IspG family. The cofactor is [4Fe-4S] cluster.

The enzyme catalyses (2E)-4-hydroxy-3-methylbut-2-enyl diphosphate + oxidized [flavodoxin] + H2O + 2 H(+) = 2-C-methyl-D-erythritol 2,4-cyclic diphosphate + reduced [flavodoxin]. The protein operates within isoprenoid biosynthesis; isopentenyl diphosphate biosynthesis via DXP pathway; isopentenyl diphosphate from 1-deoxy-D-xylulose 5-phosphate: step 5/6. Converts 2C-methyl-D-erythritol 2,4-cyclodiphosphate (ME-2,4cPP) into 1-hydroxy-2-methyl-2-(E)-butenyl 4-diphosphate. The sequence is that of 4-hydroxy-3-methylbut-2-en-1-yl diphosphate synthase (flavodoxin) from Campylobacter jejuni (strain RM1221).